A 606-amino-acid chain; its full sequence is Serine/threonine-protein kinase A-Raf (606 aa).

Residues 19-91 enclose the RBD domain; it reads GTVKVYLPNK…DGEELIVEVL (73 aa). Residues 98-144 form a Phorbol-ester/DAG-type zinc finger; the sequence is MHNFVRKTFFSLAFCDFCLKFLFHGFRCQTCGYKFHQHCSSKVPTVC. Zn(2+) contacts are provided by histidine 99, cysteine 112, cysteine 115, cysteine 125, cysteine 128, histidine 133, cysteine 136, and cysteine 144. Serine 157 and serine 162 each carry phosphoserine. Residues 160–207 form a disordered region; sequence DLSGGSRQHEAPSNRPLNELLTPQGPSPRTQHCDPEHFPFPAPANAPL. Phosphothreonine is present on threonine 181. A phosphoserine mark is found at serine 186 and serine 214. The tract at residues 240–290 is disordered; that stretch reads STDAAGSRGGSDGTPRGSPSPASVSSGRKSPHSKSPAEQRERKSLADDKKK. Threonine 253 carries the post-translational modification Phosphothreonine. Phosphoserine occurs at positions 257 and 269. The span at 274 to 289 shows a compositional bias: basic and acidic residues; sequence SPAEQRERKSLADDKK. Positions 310–570 constitute a Protein kinase domain; that stretch reads VQLLKRIGTG…PQILATIELL (261 aa). ATP contacts are provided by residues 316–324 and lysine 336; that span reads IGTGSFGTV. Threonine 318 bears the Phosphothreonine mark. The active-site Proton acceptor is the aspartate 429.

It belongs to the protein kinase superfamily. TKL Ser/Thr protein kinase family. RAF subfamily. In terms of assembly, interacts with TH1L/NELFD. It depends on Zn(2+) as a cofactor. In terms of processing, dephosphorylation of Ser-214 by the SHOC2-MRAS-PP1c (SMP) complex consisting of SHOC2, GTP-bound M-Ras/MRAS and the catalytic subunit of protein phosphatase 1 (PPP1CA, PPP1CB or PPP1CC); this relieves inactivation and stimulates kinase activity. As to expression, predominantly in urogenital tissues.

The enzyme catalyses L-seryl-[protein] + ATP = O-phospho-L-seryl-[protein] + ADP + H(+). It carries out the reaction L-threonyl-[protein] + ATP = O-phospho-L-threonyl-[protein] + ADP + H(+). Involved in the transduction of mitogenic signals from the cell membrane to the nucleus. May also regulate the TOR signaling cascade. Phosphorylates PFKFB2. Functionally, serves as a positive regulator of myogenic differentiation by inducing cell cycle arrest, the expression of myogenin and other muscle-specific proteins, and myotube formation. This Homo sapiens (Human) protein is Serine/threonine-protein kinase A-Raf (ARAF).